The following is a 274-amino-acid chain: Dermonecrotic toxin SdSicTox-betaIIB1bi (274 aa).

His-5 is a catalytic residue. Residues Glu-25 and Asp-27 each contribute to the Mg(2+) site. The active-site Nucleophile is the His-41. Cystine bridges form between Cys-45/Cys-51 and Cys-47/Cys-190. Asp-85 lines the Mg(2+) pocket.

It belongs to the arthropod phospholipase D family. Class II subfamily. Requires Mg(2+) as cofactor. Expressed by the venom gland.

Its subcellular location is the secreted. The enzyme catalyses an N-(acyl)-sphingosylphosphocholine = an N-(acyl)-sphingosyl-1,3-cyclic phosphate + choline. It catalyses the reaction an N-(acyl)-sphingosylphosphoethanolamine = an N-(acyl)-sphingosyl-1,3-cyclic phosphate + ethanolamine. It carries out the reaction a 1-acyl-sn-glycero-3-phosphocholine = a 1-acyl-sn-glycero-2,3-cyclic phosphate + choline. The catalysed reaction is a 1-acyl-sn-glycero-3-phosphoethanolamine = a 1-acyl-sn-glycero-2,3-cyclic phosphate + ethanolamine. In terms of biological role, dermonecrotic toxins cleave the phosphodiester linkage between the phosphate and headgroup of certain phospholipids (sphingolipid and lysolipid substrates), forming an alcohol (often choline) and a cyclic phosphate. This toxin acts on sphingomyelin (SM). It may also act on ceramide phosphoethanolamine (CPE), lysophosphatidylcholine (LPC) and lysophosphatidylethanolamine (LPE), but not on lysophosphatidylserine (LPS), and lysophosphatidylglycerol (LPG). It acts by transphosphatidylation, releasing exclusively cyclic phosphate products as second products. Induces dermonecrosis, hemolysis, increased vascular permeability, edema, inflammatory response, and platelet aggregation. This Sicarius cf. damarensis (strain GJB-2008) (Six-eyed sand spider) protein is Dermonecrotic toxin SdSicTox-betaIIB1bi.